A 27-amino-acid chain; its full sequence is Metalloproteinase inhibitor 1 (27 aa).

The segment covering 1–12 has biased composition (acidic residues); the sequence is IEPERQEEEEEE. The segment at 1–27 is disordered; the sequence is IEPERQEEEEEETRQRVRRGQVRQQQQ.

Metalloproteinase inhibitor, active on a globulinase from L.albus seeds, thermolysin and gelatinase B. The polypeptide is Metalloproteinase inhibitor 1 (Lupinus albus (White lupine)).